Consider the following 299-residue polypeptide: Ig alpha chain C region (299 aa).

Ig-like domains follow at residues 71 to 167 (PSLS…ATIS) and 174 to 276 (PQVH…KTID).

Functionally, ig alpha is the major immunoglobulin class in body secretions. It may serve both to defend against local infection and to prevent access of foreign antigens to the general immunologic system. The polypeptide is Ig alpha chain C region (Oryctolagus cuniculus (Rabbit)).